Consider the following 327-residue polypeptide: MDLYPEENTQSEQSHNSENNMQIFKSENSDGFSSDLMISNDQLKNISKTQLTLEKEKIFKMPNVLSQVMKKAFSRKNEILYCVSTKELSVDIHDATGKVYLPLITKEEINKRLSSLKPEVRRTMSMVHLGAVKILLKAQFRNGIDTPIKIALIDDRINSRKDCLLGAAKGNLAYGKFMFTVYPKFGISLNTQRLNQTLSLIHDFENKNLMNKGDKVMTITYIVGYALTNSHHSIDYQSNATIELEDVFQEIGNVQQSEFCTIQNDECNWAIDIAQNKALLGAKTKSQIGNSLQIGNSASSSNTENELARVSQNIDLLKNKLKEICGE.

A coiled-coil region spans residues 297–327 (SASSSNTENELARVSQNIDLLKNKLKEICGE).

Belongs to the caulimoviridae movement protein family. Homotrimer, through the coiled-coil domain. Interacts with VAP. May interact (via N-terminus) with host prenylated Rab acceptor protein 1D (PRA1D).

Its subcellular location is the host cell junction. The protein localises to the host plasmodesma. Its function is as follows. Transports viral genome to neighboring plant cells directly through plasmosdesmata, without any budding. The movement protein allows efficient cell to cell propagation, by bypassing the host cell wall barrier. Acts by forming tubules structures that increase the size exclusion limit (SEL) of plasmodesmata, thereby allowing viral ribonucleocapsids to spread directly to neighboring cells. In Cauliflower mosaic virus (strain W260) (CaMV), this protein is Movement protein.